Here is a 113-residue protein sequence, read N- to C-terminus: Sensorin-A (113 aa).

The N-terminal stretch at 1 to 32 (MPSRAATSPLNVQMMVVLCIVCLALQAVAANA) is a signal peptide. Position 54 is a phenylalanine amide (Phe-54). A propeptide spanning residues 58 to 113 (SSSETYSTNLINLLSRQLVSQEELRAILEKQPILLDEVVKILDRNDDGYITVADLL) is cleaved from the precursor. In terms of domain architecture, EF-hand spans 87 to 113 (KQPILLDEVVKILDRNDDGYITVADLL). Residues Asp-100, Asn-102, Asp-104, Tyr-106, and Asp-111 each coordinate Ca(2+).

As to expression, seems to be specific to the mechanosensory neurons of the central nervous system.

It localises to the secreted. Functionally, may function as an inhibitory cotransmitter acting in conjunction with the fast excitatory transmitter released by sensory neurons. The peptide selectively inhibits certain postsynaptic cells probably by means of sensorin A release. This chain is Sensorin-A (PSC1), found in Aplysia californica (California sea hare).